Reading from the N-terminus, the 325-residue chain is Ribosomal RNA small subunit methyltransferase H (325 aa).

Residues 33–35 (GGH), D52, L87, D101, and Q108 each bind S-adenosyl-L-methionine. Residues 285–325 (AEPAGEVEKADNPRAASVRLRAAERTAPNPDRTQPTIGGAS) form a disordered region. The span at 315–325 (DRTQPTIGGAS) shows a compositional bias: polar residues.

The protein belongs to the methyltransferase superfamily. RsmH family.

It localises to the cytoplasm. The enzyme catalyses cytidine(1402) in 16S rRNA + S-adenosyl-L-methionine = N(4)-methylcytidine(1402) in 16S rRNA + S-adenosyl-L-homocysteine + H(+). Its function is as follows. Specifically methylates the N4 position of cytidine in position 1402 (C1402) of 16S rRNA. The sequence is that of Ribosomal RNA small subunit methyltransferase H from Frankia alni (strain DSM 45986 / CECT 9034 / ACN14a).